The chain runs to 338 residues: GTPase Obg (338 aa).

In terms of domain architecture, Obg spans 1 to 159 (MQFIDEVKIH…RWLRLELKLM (159 aa)). Positions 66 to 91 (KAGRGKNGMGKDRHGANGDDLTIPVP) are disordered. Positions 160–331 (ADVGLLGFPN…LLDEIARHLW (172 aa)) constitute an OBG-type G domain. GTP is bound by residues 166–173 (GFPNVGKS), 191–195 (FTTIK), 213–216 (DIPG), 283–286 (NKID), and 312–314 (SAA). Positions 173 and 193 each coordinate Mg(2+).

The protein belongs to the TRAFAC class OBG-HflX-like GTPase superfamily. OBG GTPase family. Monomer. Mg(2+) serves as cofactor.

The protein resides in the cytoplasm. An essential GTPase which binds GTP, GDP and possibly (p)ppGpp with moderate affinity, with high nucleotide exchange rates and a fairly low GTP hydrolysis rate. Plays a role in control of the cell cycle, stress response, ribosome biogenesis and in those bacteria that undergo differentiation, in morphogenesis control. This is GTPase Obg from Geobacter metallireducens (strain ATCC 53774 / DSM 7210 / GS-15).